We begin with the raw amino-acid sequence, 1733 residues long: Protein NETWORKED 1D (1733 aa).

The NAB domain maps to 12 to 92 (YSWWWDSHIS…ERYDHATGVI (81 aa)). Coiled-coil stretches lie at residues 195–816 (KEIN…RESS), 897–931 (LIAENQDIKEASKLLEKLVSELEEENIGKQVQIDS), 960–1043 (DENS…QKLI), and 1196–1386 (ARSA…NDLM). Positions 1456–1476 (LKTSSARRSRRRNGSLRKQNH) are disordered. Residues 1460 to 1470 (SARRSRRRNGS) are compositionally biased toward basic residues. 2 coiled-coil regions span residues 1553-1627 (ANKR…KVQN) and 1653-1686 (SEQARRGSEKIGRLQLEIQRLQFLLLKLEGDRED). The segment at 1628–1656 (GFERSDGSKSSMDLDENESSRRRRISEQA) is disordered.

It belongs to the NET family.

Functionally, plant-specific actin binding protein. May be part of a membrane-cytoskeletal adapter complex. In Arabidopsis thaliana (Mouse-ear cress), this protein is Protein NETWORKED 1D.